The chain runs to 230 residues: UPF0173 metal-dependent hydrolase Dshi_2788 (230 aa).

This sequence belongs to the UPF0173 family.

In Dinoroseobacter shibae (strain DSM 16493 / NCIMB 14021 / DFL 12), this protein is UPF0173 metal-dependent hydrolase Dshi_2788.